The primary structure comprises 330 residues: MQSWVNKLWYQSHPLRFALWPLTLLFGAVSWLRRLLFSLGLKKATKLPVPVIIVGNITVGGSGKTPTVIYLIELLRSHGFKPGVISRGYGVEIEGVRSVLPEDKPASVGDEPAMIVSRTAVPMVVGAKRVDAAKHLLAEFDVDIIISDDGLQHYQLARDIELIILDGERRLGNGMLLPAGPLREAAWRLKSVDQVIVNGGIAQSGEQAMLLEPSKWLPVSPVHNGSLPPSQSQPLVAMAGIGNPQRFFDTLQALGYCVEQAQAFDDHSAYSETALNELANGRLLAMTEKDAVKCRDFAKDNWWSLAVDAKLSPSFDKQLLAKIDRLVADK.

An ATP-binding site is contributed by 58–65 (TVGGSGKT).

The protein belongs to the LpxK family.

It carries out the reaction a lipid A disaccharide + ATP = a lipid IVA + ADP + H(+). It participates in glycolipid biosynthesis; lipid IV(A) biosynthesis; lipid IV(A) from (3R)-3-hydroxytetradecanoyl-[acyl-carrier-protein] and UDP-N-acetyl-alpha-D-glucosamine: step 6/6. Functionally, transfers the gamma-phosphate of ATP to the 4'-position of a tetraacyldisaccharide 1-phosphate intermediate (termed DS-1-P) to form tetraacyldisaccharide 1,4'-bis-phosphate (lipid IVA). This Shewanella pealeana (strain ATCC 700345 / ANG-SQ1) protein is Tetraacyldisaccharide 4'-kinase.